The chain runs to 152 residues: uncharacterized protein (152 aa).

Asn-2 carries an N-linked (GlcNAc...) asparagine; by host glycan. A run of 3 helical transmembrane segments spans residues 5–25, 36–56, and 68–88; these read MILL…MNLW, LNDF…CYIL, and LIIT…QAFI. Asn-113 carries N-linked (GlcNAc...) asparagine; by host glycosylation.

It localises to the membrane. This is an uncharacterized protein from Acanthamoeba polyphaga mimivirus (APMV).